A 201-amino-acid polypeptide reads, in one-letter code: ATP-dependent Clp protease proteolytic subunit (201 aa).

Serine 100 serves as the catalytic Nucleophile. Histidine 125 is an active-site residue.

This sequence belongs to the peptidase S14 family. In terms of assembly, component of the chloroplastic Clp protease core complex.

The protein localises to the plastid. It localises to the chloroplast stroma. The catalysed reaction is Hydrolysis of proteins to small peptides in the presence of ATP and magnesium. alpha-casein is the usual test substrate. In the absence of ATP, only oligopeptides shorter than five residues are hydrolyzed (such as succinyl-Leu-Tyr-|-NHMec, and Leu-Tyr-Leu-|-Tyr-Trp, in which cleavage of the -Tyr-|-Leu- and -Tyr-|-Trp bonds also occurs).. Cleaves peptides in various proteins in a process that requires ATP hydrolysis. Has a chymotrypsin-like activity. Plays a major role in the degradation of misfolded proteins. The sequence is that of ATP-dependent Clp protease proteolytic subunit from Chloranthus spicatus (Chulantree).